A 384-amino-acid chain; its full sequence is 1-deoxy-D-xylulose 5-phosphate reductoisomerase (384 aa).

NADPH-binding residues include threonine 10, glycine 11, serine 12, isoleucine 13, asparagine 38, and asparagine 120. Lysine 121 is a binding site for 1-deoxy-D-xylulose 5-phosphate. Glutamate 122 serves as a coordination point for NADPH. Residue aspartate 146 coordinates Mn(2+). Positions 147, 148, 172, and 195 each coordinate 1-deoxy-D-xylulose 5-phosphate. Glutamate 148 lines the Mn(2+) pocket. Glycine 201 contributes to the NADPH binding site. 4 residues coordinate 1-deoxy-D-xylulose 5-phosphate: serine 208, asparagine 213, lysine 214, and glutamate 217. Residue glutamate 217 participates in Mn(2+) binding.

This sequence belongs to the DXR family. Mg(2+) serves as cofactor. It depends on Mn(2+) as a cofactor.

The catalysed reaction is 2-C-methyl-D-erythritol 4-phosphate + NADP(+) = 1-deoxy-D-xylulose 5-phosphate + NADPH + H(+). It participates in isoprenoid biosynthesis; isopentenyl diphosphate biosynthesis via DXP pathway; isopentenyl diphosphate from 1-deoxy-D-xylulose 5-phosphate: step 1/6. Catalyzes the NADPH-dependent rearrangement and reduction of 1-deoxy-D-xylulose-5-phosphate (DXP) to 2-C-methyl-D-erythritol 4-phosphate (MEP). The polypeptide is 1-deoxy-D-xylulose 5-phosphate reductoisomerase (Protochlamydia amoebophila (strain UWE25)).